The following is a 755-amino-acid chain: Cartilage oligomeric matrix protein (755 aa).

The signal sequence occupies residues 1–19 (MGPTACVLVLALAILRATG). The interval 21-84 (GQIPLGGDLA…PARTPGLSVR (64 aa)) is COMP N-terminal. Residues 85–124 (PVPLCAPGSCFPGVVCSETATGARCGPCPPGYTGNGSHCT) form the EGF-like 1 domain. Disulfide bonds link Cys89/Cys100, Cys94/Cys109, Cys112/Cys123, Cys129/Cys140, Cys134/Cys149, Cys152/Cys176, Cys182/Cys195, Cys189/Cys204, Cys207/Cys219, Cys227/Cys241, Cys235/Cys251, Cys253/Cys264, Cys280/Cys285, Cys290/Cys310, Cys326/Cys346, Cys349/Cys369, Cys385/Cys405, Cys408/Cys428, Cys446/Cys466, Cys482/Cys502, and Cys518/Cys739. Residue Asn119 is glycosylated (N-linked (GlcNAc...) asparagine). Residues 125–177 (DVNECNAHPCFPRVRCINTSPGFHCEACPPGFSGPTHEGVGLTFAKSNKQVCT) form the EGF-like 2; calcium-binding domain. The region spanning 178–220 (DINECETGQHNCVPNSVCVNTRGSFQCGPCQPGFVGDQTSGCQ) is the EGF-like 3; calcium-binding domain. Residues 223 to 265 (GQHFCPDGSPSPCHEKANCVLERDGSRSCVCAVGWAGNGLLCG) enclose the EGF-like 4 domain. 8 TSP type-3 repeats span residues 266 to 298 (RDTD…NSGQ), 299 to 334 (EDVD…NPDQ), 335 to 357 (RNSD…NDDQ), 358 to 393 (KDTD…NFDQ), 394 to 416 (SDSD…NPDQ), 417 to 454 (RDVD…NSAQ), 455 to 490 (QDSD…NPGQ), and 491 to 526 (EDND…EVTL). Disordered regions lie at residues 296–341 (SGQE…DSDK) and 353–501 (KNDD…VGDA). Basic and acidic residues-rich tracts occupy residues 332–341 (PDQRNSDSDK) and 353–368 (KNDD…RGDA). Ser394 carries the phosphoserine modification. Composition is skewed to basic and acidic residues over residues 412 to 424 (DNPD…HDFV) and 456 to 465 (DSDHDGKGDA). Residues 525–755 (TLTDFRAFQT…DYESHRLQRV (231 aa)) are mediates cell survival and induction of the IAP family of survival proteins. A TSP C-terminal domain is found at 530–744 (RAFQTVVLDP…LRYRCNDTIP (215 aa)). Asn740 is a glycosylation site (N-linked (GlcNAc...) asparagine).

It belongs to the thrombospondin family. In terms of assembly, pentamer; disulfide-linked. Exists in a more compact conformation in the presence of calcium and shows a more extended conformation in the absence of calcium. Interacts with ITGB3, ITGA5 and FN1. Binding to FN1 requires the presence of divalent cations (Ca(2+), Mg(2+) or Mn(2+)). The greatest amount of binding is seen in the presence of Mn(2+). Interacts with MATN1, MATN3, MATN4 and ACAN. Binds heparin, heparan sulfate and chondroitin sulfate. EDTA dimishes significantly its binding to ACAN and abolishes its binding to MATN3, MATN4 and chondroitin sulfate. Interacts with collagen I, II and IX, and interaction with these collagens is dependent on the presence of zinc ions. Interacts with ADAMTS12. Interacts with ITGA7. It depends on Ca(2+) as a cofactor. Post-translationally, proteolytically cleaved by metalloproteases ADAMTS4 and ADAMTS1 with ADAMTS4 showing more potent activity. Expressed in cartilage, including nasal, knee epiphyseal and rib tissues. Abundantly expressed in chondrocyte and tendon extracellular matrix (at protein level).

It localises to the secreted. The protein localises to the extracellular space. The protein resides in the extracellular matrix. Its function is as follows. Plays a role in the structural integrity of cartilage via its interaction with other extracellular matrix proteins such as the collagens and fibronectin. Can mediate the interaction of chondrocytes with the cartilage extracellular matrix through interaction with cell surface integrin receptors. Could play a role in the pathogenesis of osteoarthritis. Potent suppressor of apoptosis in both primary chondrocytes and transformed cells. Suppresses apoptosis by blocking the activation of caspase-3 and by inducing the IAP family of survival proteins (BIRC3, BIRC2, BIRC5 and XIAP). Essential for maintaining a vascular smooth muscle cells (VSMCs) contractile/differentiated phenotype under physiological and pathological stimuli. Maintains this phenotype of VSMCs by interacting with ITGA7. The chain is Cartilage oligomeric matrix protein from Mus musculus (Mouse).